The following is a 367-amino-acid chain: GTP cyclohydrolase FolE2 (367 aa).

It belongs to the GTP cyclohydrolase IV family.

It catalyses the reaction GTP + H2O = 7,8-dihydroneopterin 3'-triphosphate + formate + H(+). The protein operates within cofactor biosynthesis; 7,8-dihydroneopterin triphosphate biosynthesis; 7,8-dihydroneopterin triphosphate from GTP: step 1/1. Converts GTP to 7,8-dihydroneopterin triphosphate. This chain is GTP cyclohydrolase FolE2, found in Ruegeria pomeroyi (strain ATCC 700808 / DSM 15171 / DSS-3) (Silicibacter pomeroyi).